We begin with the raw amino-acid sequence, 112 residues long: Large ribosomal subunit protein mL53 (112 aa).

This sequence belongs to the mitochondrion-specific ribosomal protein mL53 family. In terms of assembly, component of the mitochondrial ribosome large subunit (39S) which comprises a 16S rRNA and about 50 distinct proteins.

It is found in the mitochondrion. This Bos taurus (Bovine) protein is Large ribosomal subunit protein mL53 (MRPL53).